The sequence spans 1891 residues: Transcription initiation factor TFIID subunit 1 (1891 aa).

3 disordered regions span residues 1–34 (MGPGWAGLLQDKGGGSPSVVMSDTDSDEESAGGG), 154–180 (KLMPPPPPPPGPLKKEKDQDDITGVSE), and 197–224 (ASEKVDFSSSSDSESEMGPQDAAQSESK). The 435-residue stretch at 1–435 (MGPGWAGLLQ…VTQLHWEDDI (435 aa)) folds into the Protein kinase 1 domain. Positions 156-165 (MPPPPPPPGP) are enriched in pro residues. Over residues 197-208 (ASEKVDFSSSSD) the composition is skewed to low complexity. Position 328 is a phosphoserine; by autocatalysis (Ser-328). The interval 535–556 (PDEKEEATSNSPSKENKKESSL) is disordered. Residues 538-997 (KEEATSNSPS…KIPNKPTQQK (460 aa)) are histone acetyltransferase (HAT). Lys-565 carries the N6-acetyllysine modification. Glycyl lysine isopeptide (Lys-Gly) (interchain with G-Cter in SUMO2) cross-links involve residues Lys-570 and Lys-583. Disordered stretches follow at residues 990–1009 (PNKPTQQKDDKEPQPVKKTV), 1128–1148 (MLQNKKTSSQLSREREEQERK), and 1254–1278 (RLKRNQEKEKLKGPPEKKPKKMKER). 3 stretches are compositionally biased toward basic and acidic residues: residues 995–1004 (QQKDDKEPQP), 1139–1148 (SREREEQERK), and 1254–1270 (RLKRNQEKEKLKGPPEK). The HMG box DNA-binding region spans 1216 to 1294 (VRIRTTKDEE…CGACGAIGHM (79 aa)). The tract at residues 1363–1650 (VLKFPKQQLP…TAKEAALEEA (288 aa)) is interaction with ASF1A and ASF1B. The Nuclear localization signal signature appears at 1372–1379 (PPKKKRRV). Bromo domains follow at residues 1397 to 1505 (RRRT…LKEK) and 1519 to 1628 (LLDD…LTEY). Positions 1446-1891 (MDLQTLRENV…AGDTDLDSDE (446 aa)) constitute a Protein kinase 2 domain. Disordered regions lie at residues 1651 to 1676 (ELESLDPMTPGPYTPQPPDLYDNNTS) and 1690 to 1891 (SNLS…DSDE). The span at 1659–1668 (TPGPYTPQPP) shows a compositional bias: pro residues. 2 positions are modified to phosphoserine: Ser-1690 and Ser-1693. Residues 1690–1708 (SNLSVLDIPSATSEKQLTQ) show a composition bias toward polar residues. 2 stretches are compositionally biased toward acidic residues: residues 1711-1723 (GDGDGDLADEEEG) and 1741-1756 (EGEDDEEDAGSDEEGD). Residues 1764-1778 (LSESGSDSDVESGSL) show a composition bias toward low complexity. Ser-1799, Ser-1802, and Ser-1820 each carry phosphoserine. Residues 1830–1840 (KSNTQDTSFSS) show a composition bias toward polar residues. Acidic residues predominate over residues 1846–1855 (VSEEEEDEEE). A Phosphoserine modification is found at Ser-1847. Residues 1858 to 1867 (SGPSVLSQVH) show a composition bias toward polar residues.

It belongs to the TAF1 family. In terms of assembly, component of the TFIID basal transcription factor complex, composed of TATA-box-binding protein TBP, and a number of TBP-associated factors (TAFs). TFIID consists of at least TBP, TAF1, TAF2, TAF3, TAF4, TAF5, TAF6, TAF7, TAF8, TAF9, TAF10, TAF11, TAF12 and TAF13. Interacts with TAF7; the interaction is direct. TAF1, when part of the TFIID complex, interacts with C-terminus of TP53. Part of a TFIID-containing RNA polymerase II pre-initiation complex that is composed of TBP and at least GTF2A1, GTF2A2, GTF2E1, GTF2E2, GTF2F1, GTF2H2, GTF2H3, GTF2H4, GTF2H5, GTF2B, TCEA1, ERCC2, ERCC3, TAF1, TAF2, TAF3, TAF4, TAF5, TAF6, TAF7, TAF8, TAF9, TAF10, TAF11, TAF12 and TAF13. Component of some MLL1/MLL complex, at least composed of the core components KMT2A/MLL1, ASH2L, HCFC1/HCF1, WDR5 and RBBP5, as well as the facultative components BACC1, CHD8, E2F6, HSP70, INO80C, KANSL1, LAS1L, MAX, MCRS1, MGA, KAT8/MOF, PELP1, PHF20, PRP31, RING2, RUVB1/TIP49A, RUVB2/TIP49B, SENP3, TAF1, TAF4, TAF6, TAF7, TAF9 and TEX10. RB1 interacts with the N-terminal domain of TAF1. Interacts with ASF1A and ASF1B. Interacts (via bromo domains) with acetylated lysine residues on the N-terminus of histone H1.4, H2A, H2B, H3 and H4 (in vitro). Mg(2+) serves as cofactor. Post-translationally, phosphorylated by casein kinase II in vitro.

The protein localises to the nucleus. The enzyme catalyses L-seryl-[protein] + ATP = O-phospho-L-seryl-[protein] + ADP + H(+). It carries out the reaction L-threonyl-[protein] + ATP = O-phospho-L-threonyl-[protein] + ADP + H(+). The catalysed reaction is L-lysyl-[protein] + acetyl-CoA = N(6)-acetyl-L-lysyl-[protein] + CoA + H(+). Autophosphorylates on Ser residues. Inhibited by retinoblastoma tumor suppressor protein, RB1. Binding to TAF1 or CIITA inhibits the histone acetyltransferase activity. The TFIID basal transcription factor complex plays a major role in the initiation of RNA polymerase II (Pol II)-dependent transcription. TFIID recognizes and binds promoters with or without a TATA box via its subunit TBP, a TATA-box-binding protein, and promotes assembly of the pre-initiation complex (PIC). The TFIID complex consists of TBP and TBP-associated factors (TAFs), including TAF1, TAF2, TAF3, TAF4, TAF5, TAF6, TAF7, TAF8, TAF9, TAF10, TAF11, TAF12 and TAF13. TAF1 is the largest component and core scaffold of the TFIID complex, involved in nucleating complex assembly. TAF1 forms a promoter DNA binding subcomplex of TFIID, together with TAF7 and TAF2. Contains novel N- and C-terminal Ser/Thr kinase domains which can autophosphorylate or transphosphorylate other transcription factors. Phosphorylates TP53 on 'Thr-55' which leads to MDM2-mediated degradation of TP53. Phosphorylates GTF2A1 and GTF2F1 on Ser residues. Possesses DNA-binding activity. Exhibits histone acetyltransferase activity towards histones H3 and H4. Essential for progression of the G1 phase of the cell cycle. This chain is Transcription initiation factor TFIID subunit 1, found in Mus musculus (Mouse).